The primary structure comprises 113 residues: Pro-FMRFamide-related neuropeptide FF (113 aa).

The N-terminal stretch at 1-20 (MDSRQAAALLVLLLLIDGGC) is a signal peptide. Residues 21 to 65 (AEGPGGQQEDQLSAEEDSEPLPPQDAQTSGSLLHYLLQAMERPGR) constitute a propeptide that is removed on maturation. Residues 22 to 48 (EGPGGQQEDQLSAEEDSEPLPPQDAQT) form a disordered region. Phe-76 is subject to Phenylalanine amide. A propeptide spanning residues 79 to 92 (NTQGSWRNEWLSPR) is cleaved from the precursor. Residue Phe-110 is modified to Phenylalanine amide.

It belongs to the FARP (FMRFamide related peptide) family.

The protein resides in the secreted. In terms of biological role, morphine modulating peptides. Have wide-ranging physiologic effects, including the modulation of morphine-induced analgesia, elevation of arterial blood pressure, and increased somatostatin secretion from the pancreas. Neuropeptide FF potentiates and sensitizes ASIC1 and ASIC3 channels. In Homo sapiens (Human), this protein is Pro-FMRFamide-related neuropeptide FF.